The following is a 142-amino-acid chain: MLLSADDKKHIKAIMPSIAAHGDKFGGEALYRMFLVNPKTKTYFPTFDFHHNSKQISAHGKKVVDALNEASNHLDNIAGSLSKLSDLHAYDLRVDPGNFPLLAHNILVVVAMNFPKQFDPATHKALDKFLATVSSVLTSKYR.

Positions 2–142 (LLSADDKKHI…VSSVLTSKYR (141 aa)) constitute a Globin domain. An O2-binding site is contributed by histidine 59. Histidine 88 provides a ligand contact to heme b.

The protein belongs to the globin family. In terms of assembly, heterotetramer of two alpha chains and two beta chains. Red blood cells.

In terms of biological role, involved in oxygen transport from the lung to the various peripheral tissues. The chain is Hemoglobin subunit alpha-1 (hba1) from Xenopus borealis (Kenyan clawed frog).